The chain runs to 507 residues: Sulfatase (507 aa).

The signal sequence occupies residues 1–18 (MKTRYFLLLGICMLSCRT). Ca(2+) contacts are provided by aspartate 39, aspartate 40, and cysteine 79. Cysteine 79 (nucleophile) is an active-site residue. At cysteine 79 the chain carries 3-oxoalanine (Cys). Histidine 139 is a catalytic residue. Residues aspartate 325 and histidine 326 each contribute to the Ca(2+) site.

Belongs to the sulfatase family. The cofactor is Ca(2+). The conversion to 3-oxoalanine (also known as C-formylglycine, FGly), of a serine or cysteine residue in prokaryotes and of a cysteine residue in eukaryotes, is critical for catalytic activity. This post-translational modification is severely defective in multiple sulfatase deficiency (MSD).

The protein localises to the periplasm. Its function is as follows. Sulfatase that may be involved in ulvan degradation. Ulvan is the main polysaccharide component of the Ulvales (green seaweed) cell wall. It is composed of disaccharide building blocks comprising 3-sulfated rhamnose (Rha3S) linked to D-glucuronic acid (GlcA), L-iduronic acid (IduA), or D-xylose (Xyl). Has no activity on different ulvan polymers. The polypeptide is Sulfatase (Formosa agariphila (strain DSM 15362 / KCTC 12365 / LMG 23005 / KMM 3901 / M-2Alg 35-1)).